A 529-amino-acid polypeptide reads, in one-letter code: Ribonuclease Y (529 aa).

The chain crosses the membrane as a helical span at residues 4 to 24; sequence GLIYISLEVLVACLITALIMY. Residues 216-297 form the KH domain; that stretch reads LTTRIALPCS…NRIEEVYHRV (82 aa). Positions 342–435 constitute an HD domain; sequence ALQHSKEVAL…VCAADALSAG (94 aa).

It belongs to the RNase Y family.

Its subcellular location is the cell membrane. Endoribonuclease that initiates mRNA decay. The protein is Ribonuclease Y of Helicobacter pylori (strain HPAG1).